The sequence spans 116 residues: Nucleoid-associated protein P9215_00191 (116 aa).

It belongs to the YbaB/EbfC family. In terms of assembly, homodimer.

The protein localises to the cytoplasm. The protein resides in the nucleoid. Binds to DNA and alters its conformation. May be involved in regulation of gene expression, nucleoid organization and DNA protection. The chain is Nucleoid-associated protein P9215_00191 from Prochlorococcus marinus (strain MIT 9215).